Here is a 600-residue protein sequence, read N- to C-terminus: MNSPGGRNDKKKPVTPAAETGPGSPTTPPSTETQVVLAPPSPHKRNLHLFSYPLLAVFSLLRFLAFQLGLLFVWCCELLSRSVMADKGRTVASTAAAQDRPQEPEVVRSYHQQAFQYISLALRVDEEEKDQKEQAVQWYKKGIEELEKGIAVPISGKGEQYDRARRLQAKMSTNLIMAKDRLQLLAKLQADIQGPHSQMEVCSDNTNLPCRNGLLKPEKGAVPKKKDPPPITSNSYSRTKAPPKSGSLGNRIPNCTSVPTSARQAGAHTPSNRGATGKNNTRTNKPATPTTAVRKKDMKNLRNVDSNLANLILNEIVDSGPSVKFADIAGQDLAKQALQEIVILPSIRPELFTGLRAPARGLLLFGPPGNGKTMLAKAVAAESNATFFNISAASLTSKYVGEGEKLVRALFSVARELQPSIIFIDEVDSLLCERREGEHDASRRLKTEFLIEFDGVQSGGDDRVLVMGATNRPQELDDAVLRRFTKRVYVALPNEETRLVLLKNLLSKQGNPLSEKELTQLSRLTEGYSGSDITALAKDAALGPIRELKPEQVKNMAASEMRNMKYSDFLGSLKKIKCSVSHSTLESYIRWNQDFGDTTV.

Positions 1-39 (MNSPGGRNDKKKPVTPAAETGPGSPTTPPSTETQVVLAP) are disordered. At 1–53 (MNSPGGRNDKKKPVTPAAETGPGSPTTPPSTETQVVLAPPSPHKRNLHLFSYP) the chain is on the cytoplasmic side. Residues 15-33 (TPAAETGPGSPTTPPSTET) are compositionally biased toward low complexity. The helical intramembrane region spans 54 to 74 (LLAVFSLLRFLAFQLGLLFVW). Over 75–600 (CCELLSRSVM…WNQDFGDTTV (526 aa)) the chain is Cytoplasmic. The 76-residue stretch at 110 to 185 (YHQQAFQYIS…IMAKDRLQLL (76 aa)) folds into the MIT domain. The segment at 213 to 294 (GLLKPEKGAV…KPATPTTAVR (82 aa)) is disordered. Positions 216–228 (KPEKGAVPKKKDP) are enriched in basic and acidic residues. Positions 253–291 (PNCTSVPTSARQAGAHTPSNRGATGKNNTRTNKPATPTT) are enriched in polar residues. 366-373 (GPPGNGKT) lines the ATP pocket.

It belongs to the AAA ATPase family. Spastin subfamily. As to quaternary structure, homohexamer. The homohexamer is stabilized by ATP-binding. The homohexamer may adopt a ring conformation through which microtubules pass prior to being severed. Interacts with microtubules.

It localises to the membrane. It is found in the cytoplasm. The protein resides in the cytoskeleton. Its subcellular location is the microtubule organizing center. The protein localises to the centrosome. It localises to the perinuclear region. It is found in the nucleus. The enzyme catalyses n ATP + n H2O + a microtubule = n ADP + n phosphate + (n+1) alpha/beta tubulin heterodimers.. In terms of biological role, ATP-dependent microtubule severing protein that specifically recognizes and cuts microtubules that are polyglutamylated. Preferentially recognizes and acts on microtubules decorated with short polyglutamate tails: severing activity increases as the number of glutamates per tubulin rises from one to eight, but decreases beyond this glutamylation threshold. Microtubule severing promotes reorganization of cellular microtubule arrays and the release of microtubules from the centrosome following nucleation. Required for membrane traffic from the endoplasmic reticulum (ER) to the Golgi and for completion of the abscission stage of cytokinesis. Also plays a role in axon growth and the formation of axonal branches. The polypeptide is Spastin (Xenopus laevis (African clawed frog)).